Reading from the N-terminus, the 560-residue chain is Arginine--tRNA ligase (560 aa).

The short motif at Ala135–Asn145 is the 'HIGH' region element.

The protein belongs to the class-I aminoacyl-tRNA synthetase family. In terms of assembly, monomer.

It localises to the cytoplasm. The enzyme catalyses tRNA(Arg) + L-arginine + ATP = L-arginyl-tRNA(Arg) + AMP + diphosphate. The protein is Arginine--tRNA ligase of Moorella thermoacetica (strain ATCC 39073 / JCM 9320).